Consider the following 187-residue polypeptide: UPF0301 protein VF_0434 (187 aa).

The protein belongs to the UPF0301 (AlgH) family.

In Aliivibrio fischeri (strain ATCC 700601 / ES114) (Vibrio fischeri), this protein is UPF0301 protein VF_0434.